Consider the following 394-residue polypeptide: SVGFKAGVKDYRLTYYTPEYETLATDILAAFRVTPQPGVPPEEAGAAVAAESSTGTWTTVWTDGLTSLDRYKGRCYHIEPVAGEENQYIAYVAYPLDLFEEGSVTNMFTSIVGNVFGFKALRALRLEDLRIPPAYSKTFQGPPHGIQVERDKLNKYGRPLLGCTIKPKLGLSAKNYGRAVYECLRGGLDFTKDDENVNSQPFMRWRDRFLFCTEAIYKAQAETGEIKGHYLNATAGTSEEMIKRAVCARELGVPIVMHDYLTGGFTANTSLAHYCRDNGLLLHIHRAMHAVIDRQRNHGIHFRVLAKALRMSGGDHIHSGTVVGKLEGERDVTLGFVDLLRDDFIEKDRSRGIYFTQDWVSMPGVLPVASGGIHVWHMPALTEIFGDDSVLQFG.

Position 5 is an N6,N6,N6-trimethyllysine (Lys5). Substrate contacts are provided by Asn114 and Thr164. Lys166 serves as the catalytic Proton acceptor. Lys168 contacts substrate. Residues Lys192, Asp194, and Glu195 each coordinate Mg(2+). Lys192 carries the N6-carboxylysine modification. The active-site Proton acceptor is the His285. Residues Arg286, His318, and Ser370 each coordinate substrate.

The protein belongs to the RuBisCO large chain family. Type I subfamily. Heterohexadecamer of 8 large chains and 8 small chains. Mg(2+) is required as a cofactor.

The protein resides in the plastid. It localises to the chloroplast. The enzyme catalyses 2 (2R)-3-phosphoglycerate + 2 H(+) = D-ribulose 1,5-bisphosphate + CO2 + H2O. It carries out the reaction D-ribulose 1,5-bisphosphate + O2 = 2-phosphoglycolate + (2R)-3-phosphoglycerate + 2 H(+). Its function is as follows. RuBisCO catalyzes two reactions: the carboxylation of D-ribulose 1,5-bisphosphate, the primary event in carbon dioxide fixation, as well as the oxidative fragmentation of the pentose substrate in the photorespiration process. Both reactions occur simultaneously and in competition at the same active site. The chain is Ribulose bisphosphate carboxylase large chain (rbcL) from Euryale ferox (Gorgon plant).